Reading from the N-terminus, the 130-residue chain is Probable 4-amino-4-deoxy-L-arabinose-phosphoundecaprenol flippase subunit ArnF (130 aa).

Residues 1 to 4 are Cytoplasmic-facing; the sequence is MGYG. Residues 5–25 traverse the membrane as a helical segment; that stretch reads WALFSVALVSAAQLLLKWVMM. Residues 26 to 44 are Periplasmic-facing; it reads HLPPLGALRLWLDPAYAEP. A helical membrane pass occupies residues 45–65; it reads LALLMGGLLAYVCSMGCWFMA. Residues 66–74 are Cytoplasmic-facing; that stretch reads LRRLPLNKA. A helical transmembrane segment spans residues 75 to 95; the sequence is YPLLSLSYVLVAACALMIPEF. The Periplasmic portion of the chain corresponds to 96-103; that stretch reads NERFTFSR. A helical transmembrane segment spans residues 104–124; it reads LMGVALICGGLLLICLPAGGK. At 125-130 the chain is on the cytoplasmic side; that stretch reads GDTPRR.

It belongs to the ArnF family. In terms of assembly, heterodimer of ArnE and ArnF.

Its subcellular location is the cell inner membrane. It functions in the pathway bacterial outer membrane biogenesis; lipopolysaccharide biosynthesis. Translocates 4-amino-4-deoxy-L-arabinose-phosphoundecaprenol (alpha-L-Ara4N-phosphoundecaprenol) from the cytoplasmic to the periplasmic side of the inner membrane. The protein is Probable 4-amino-4-deoxy-L-arabinose-phosphoundecaprenol flippase subunit ArnF of Sodalis glossinidius (strain morsitans).